The sequence spans 175 residues: MGPRNPSPDPLSESESEEEENTNYLNESSGEEWDSSEEEDPVVPNLTPLESLAWQVKCLLKYSTTWKPLNPNSWLYHAKLLDASTPVHILREIGLRLSHCSHCVPKLEPIPEWPPLASCGVPPFQKPLISPSRLSRDHATLNGALQFATKQLSRTLSRATPHAFLPKLVPLAFSS.

The segment at 1-42 (MGPRNPSPDPLSESESEEEENTNYLNESSGEEWDSSEEEDPV) is disordered. 2 stretches are compositionally biased toward acidic residues: residues 12 to 21 (SESESEEEEN) and 29 to 41 (SGEE…EEDP). K61 carries the post-translational modification N6-acetyllysine.

As to quaternary structure, interacts with DDB1 and CUL4A.

It localises to the nucleus. It functions in the pathway protein modification; protein ubiquitination. Its function is as follows. Functions as a substrate recognition component for CUL4-DDB1 E3 ubiquitin-protein ligase complex, which mediates ubiquitination and proteasome-dependent degradation of nuclear proteins. This Bos taurus (Bovine) protein is DDB1- and CUL4-associated factor 16 (DCAF16).